Consider the following 125-residue polypeptide: Late histone H2A.1 (125 aa).

A compositionally biased stretch (basic residues) spans 1-18 (MSGRGKGKAKGTKSKTRS). A disordered region spans residues 1–21 (MSGRGKGKAKGTKSKTRSSRA). Ser2 carries the N-acetylserine modification. Ser2 is modified (phosphoserine). Position 104 is an N5-methylglutamine (Gln104). Lys119 is covalently cross-linked (Glycyl lysine isopeptide (Lys-Gly) (interchain with G-Cter in ubiquitin)).

It belongs to the histone H2A family. The nucleosome is a histone octamer containing two molecules each of H2A, H2B, H3 and H4 assembled in one H3-H4 heterotetramer and two H2A-H2B heterodimers. The octamer wraps approximately 147 bp of DNA. Monoubiquitination of Lys-119 gives a specific tag for epigenetic transcriptional repression. Post-translationally, phosphorylation of Ser-2 directly represses transcription.

The protein resides in the nucleus. Its subcellular location is the chromosome. Its function is as follows. Core component of nucleosome. Nucleosomes wrap and compact DNA into chromatin, limiting DNA accessibility to the cellular machineries which require DNA as a template. Histones thereby play a central role in transcription regulation, DNA repair, DNA replication and chromosomal stability. DNA accessibility is regulated via a complex set of post-translational modifications of histones, also called histone code, and nucleosome remodeling. This Psammechinus miliaris (Green sea urchin) protein is Late histone H2A.1.